The following is a 124-amino-acid chain: Small ribosomal subunit protein bS6 (124 aa).

Residues 96–124 (ETGPSPMMKEVQREEAKKAAAAQPTEAQA) form a disordered region. Residues 114-124 (AAAAQPTEAQA) are compositionally biased toward low complexity.

The protein belongs to the bacterial ribosomal protein bS6 family.

In terms of biological role, binds together with bS18 to 16S ribosomal RNA. This Burkholderia vietnamiensis (strain G4 / LMG 22486) (Burkholderia cepacia (strain R1808)) protein is Small ribosomal subunit protein bS6.